The primary structure comprises 563 residues: Methylcrotonoyl-CoA carboxylase beta chain, mitochondrial (563 aa).

The transit peptide at 1 to 22 (MWAVLRLALRPCARASPAGPRA) directs the protein to the mitochondrion. The CoA carboxyltransferase N-terminal domain occupies 49 to 306 (MKALVNQLHE…QKKLDVTIEP (258 aa)). Positions 49-555 (MKALVNQLHE…SAALNAPIEK (507 aa)) are carboxyltransferase. Lys-70 carries the post-translational modification N6-acetyllysine; alternate. Residue Lys-70 is modified to N6-succinyllysine; alternate. An N6-succinyllysine modification is found at Lys-141. In terms of domain architecture, CoA carboxyltransferase C-terminal spans 309 to 555 (EPLFPADELY…SAALNAPIEK (247 aa)). The acyl-CoA binding stretch occupies residues 343 to 372 (RFTEFKAFYGDTLVTGFARIFGYPVGIVGN). Position 495 is an N6-acetyllysine; alternate (Lys-495). Lys-495 carries the post-translational modification N6-succinyllysine; alternate. Lys-511 carries the post-translational modification N6-acetyllysine.

It belongs to the AccD/PCCB family. In terms of assembly, probably a dodecamer composed of six biotin-containing alpha subunits (MCCC1) and six beta (MCCC2) subunits.

It localises to the mitochondrion matrix. The enzyme catalyses 3-methylbut-2-enoyl-CoA + hydrogencarbonate + ATP = 3-methyl-(2E)-glutaconyl-CoA + ADP + phosphate + H(+). Its pathway is amino-acid degradation; L-leucine degradation; (S)-3-hydroxy-3-methylglutaryl-CoA from 3-isovaleryl-CoA: step 2/3. In terms of biological role, carboxyltransferase subunit of the 3-methylcrotonyl-CoA carboxylase, an enzyme that catalyzes the conversion of 3-methylcrotonyl-CoA to 3-methylglutaconyl-CoA, a critical step for leucine and isovaleric acid catabolism. This Homo sapiens (Human) protein is Methylcrotonoyl-CoA carboxylase beta chain, mitochondrial (MCCC2).